Here is a 224-residue protein sequence, read N- to C-terminus: Flagellar L-ring protein (224 aa).

Residues 1–15 (MRSLLFSLTALVLAG) form the signal peptide. Residue Cys-16 is the site of N-palmitoyl cysteine attachment. Cys-16 is lipidated: S-diacylglycerol cysteine.

It belongs to the FlgH family. The basal body constitutes a major portion of the flagellar organelle and consists of four rings (L,P,S, and M) mounted on a central rod.

It localises to the cell outer membrane. Its subcellular location is the bacterial flagellum basal body. Functionally, assembles around the rod to form the L-ring and probably protects the motor/basal body from shearing forces during rotation. The chain is Flagellar L-ring protein from Idiomarina loihiensis (strain ATCC BAA-735 / DSM 15497 / L2-TR).